We begin with the raw amino-acid sequence, 226 residues long: ATP synthase F(0) complex subunit a (226 aa).

The next 6 membrane-spanning stretches (helical) occupy residues 12–32 (PTMM…ILFP), 68–88 (WALM…LGLL), 97–117 (QLSM…ITGF), 138–158 (IPML…ALAV), 164–184 (ITAG…LMNI), and 200–222 (TILE…SLYL).

Belongs to the ATPase A chain family. In terms of assembly, component of the ATP synthase complex composed at least of ATP5F1A/subunit alpha, ATP5F1B/subunit beta, ATP5MC1/subunit c (homooctomer), MT-ATP6/subunit a, MT-ATP8/subunit 8, ATP5ME/subunit e, ATP5MF/subunit f, ATP5MG/subunit g, ATP5MK/subunit k, ATP5MJ/subunit j, ATP5F1C/subunit gamma, ATP5F1D/subunit delta, ATP5F1E/subunit epsilon, ATP5PF/subunit F6, ATP5PB/subunit b, ATP5PD/subunit d, ATP5PO/subunit OSCP. ATP synthase complex consists of a soluble F(1) head domain (subunits alpha(3) and beta(3)) - the catalytic core - and a membrane F(0) domain - the membrane proton channel (subunits c, a, 8, e, f, g, k and j). These two domains are linked by a central stalk (subunits gamma, delta, and epsilon) rotating inside the F1 region and a stationary peripheral stalk (subunits F6, b, d, and OSCP). Interacts with DNAJC30; interaction is direct.

The protein resides in the mitochondrion inner membrane. It catalyses the reaction H(+)(in) = H(+)(out). Functionally, subunit a, of the mitochondrial membrane ATP synthase complex (F(1)F(0) ATP synthase or Complex V) that produces ATP from ADP in the presence of a proton gradient across the membrane which is generated by electron transport complexes of the respiratory chain. ATP synthase complex consist of a soluble F(1) head domain - the catalytic core - and a membrane F(1) domain - the membrane proton channel. These two domains are linked by a central stalk rotating inside the F(1) region and a stationary peripheral stalk. During catalysis, ATP synthesis in the catalytic domain of F(1) is coupled via a rotary mechanism of the central stalk subunits to proton translocation. With the subunit c (ATP5MC1), forms the proton-conducting channel in the F(0) domain, that contains two crucial half-channels (inlet and outlet) that facilitate proton movement from the mitochondrial intermembrane space (IMS) into the matrix. Protons are taken up via the inlet half-channel and released through the outlet half-channel, following a Grotthuss mechanism. In Felis catus (Cat), this protein is ATP synthase F(0) complex subunit a.